The primary structure comprises 522 residues: GMP synthase [glutamine-hydrolyzing] (522 aa).

Residues 9–204 form the Glutamine amidotransferase type-1 domain; the sequence is KILILDFGAQ…VVDICGCQML (196 aa). The active-site Nucleophile is C86. Active-site residues include H178 and E180. The GMPS ATP-PPase domain occupies 205-397; it reads WTAANIIEDQ…LGLPHAMVYR (193 aa). An ATP-binding site is contributed by 232 to 238; the sequence is SGGVDSS.

Homodimer.

The enzyme catalyses XMP + L-glutamine + ATP + H2O = GMP + L-glutamate + AMP + diphosphate + 2 H(+). It participates in purine metabolism; GMP biosynthesis; GMP from XMP (L-Gln route): step 1/1. Its function is as follows. Catalyzes the synthesis of GMP from XMP. This Xylella fastidiosa (strain 9a5c) protein is GMP synthase [glutamine-hydrolyzing] (guaA).